Reading from the N-terminus, the 154-residue chain is Ribonuclease H (154 aa).

The 141-residue stretch at 1–141 (MKRIEAYTDG…ADELARAGME (141 aa)) folds into the RNase H type-1 domain. Residues D9, E47, D69, and D133 each contribute to the Mg(2+) site.

The protein belongs to the RNase H family. As to quaternary structure, monomer. Requires Mg(2+) as cofactor.

It is found in the cytoplasm. It catalyses the reaction Endonucleolytic cleavage to 5'-phosphomonoester.. Functionally, endonuclease that specifically degrades the RNA of RNA-DNA hybrids. This is Ribonuclease H from Brucella abortus (strain 2308).